A 191-amino-acid polypeptide reads, in one-letter code: Large ribosomal subunit protein uL5 (191 aa).

It belongs to the universal ribosomal protein uL5 family. As to quaternary structure, part of the 50S ribosomal subunit; part of the 5S rRNA/L5/L18/L25 subcomplex. Contacts the 5S rRNA and the P site tRNA. Forms a bridge to the 30S subunit in the 70S ribosome.

Functionally, this is one of the proteins that bind and probably mediate the attachment of the 5S RNA into the large ribosomal subunit, where it forms part of the central protuberance. In the 70S ribosome it contacts protein S13 of the 30S subunit (bridge B1b), connecting the 2 subunits; this bridge is implicated in subunit movement. Contacts the P site tRNA; the 5S rRNA and some of its associated proteins might help stabilize positioning of ribosome-bound tRNAs. The polypeptide is Large ribosomal subunit protein uL5 (Salinibacter ruber (strain DSM 13855 / M31)).